Reading from the N-terminus, the 183-residue chain is Bifunctional protein PyrR (183 aa).

A PRPP-binding motif is present at residues 102 to 114 (VVLVDDVLYTGRT).

The protein belongs to the purine/pyrimidine phosphoribosyltransferase family. PyrR subfamily. In terms of assembly, homodimer and homohexamer; in equilibrium.

It catalyses the reaction UMP + diphosphate = 5-phospho-alpha-D-ribose 1-diphosphate + uracil. Regulates transcriptional attenuation of the pyrimidine nucleotide (pyr) operon by binding in a uridine-dependent manner to specific sites on pyr mRNA. This disrupts an antiterminator hairpin in the RNA and favors formation of a downstream transcription terminator, leading to a reduced expression of downstream genes. In terms of biological role, also displays a weak uracil phosphoribosyltransferase activity which is not physiologically significant. The protein is Bifunctional protein PyrR of Listeria monocytogenes serotype 4a (strain HCC23).